We begin with the raw amino-acid sequence, 100 residues long: NADH-quinone oxidoreductase subunit K 2 (100 aa).

The next 3 membrane-spanning stretches (helical) occupy residues 4–24 (LWWH…GVLL), 28–48 (ILVV…NFIA), and 60–80 (IFAI…LGIL).

It belongs to the complex I subunit 4L family. In terms of assembly, NDH-1 is composed of 14 different subunits. Subunits NuoA, H, J, K, L, M, N constitute the membrane sector of the complex.

The protein localises to the cell inner membrane. The enzyme catalyses a quinone + NADH + 5 H(+)(in) = a quinol + NAD(+) + 4 H(+)(out). Its function is as follows. NDH-1 shuttles electrons from NADH, via FMN and iron-sulfur (Fe-S) centers, to quinones in the respiratory chain. The immediate electron acceptor for the enzyme in this species is believed to be ubiquinone. Couples the redox reaction to proton translocation (for every two electrons transferred, four hydrogen ions are translocated across the cytoplasmic membrane), and thus conserves the redox energy in a proton gradient. The protein is NADH-quinone oxidoreductase subunit K 2 of Sinorhizobium fredii (strain NBRC 101917 / NGR234).